A 229-amino-acid polypeptide reads, in one-letter code: Lipoprotein-releasing system ATP-binding protein LolD (229 aa).

The ABC transporter domain occupies 7–229 (LKCKNVTKTY…KNGKLYKKNL (223 aa)). 43 to 50 (GDSGSGKS) serves as a coordination point for ATP.

This sequence belongs to the ABC transporter superfamily. Lipoprotein translocase (TC 3.A.1.125) family. The complex is composed of two ATP-binding proteins (LolD) and two transmembrane proteins (LolC and LolE).

It is found in the cell membrane. Part of the ABC transporter complex LolCDE involved in the translocation of lipoproteins, in an ATP-dependent manner. This is Lipoprotein-releasing system ATP-binding protein LolD from Wigglesworthia glossinidia brevipalpis.